Consider the following 74-residue polypeptide: Serine protease inhibitor Kazal-type 7 (74 aa).

A signal peptide spans 1 to 17 (MKLLGGLLLLFTATCLC). Positions 18–74 (NVDCDIYKKYPVVAIPCPIENIPVCGSDYITYGNKCKLCTEILRSNGKIQFLHEGHC) constitute a Kazal-like domain. Intrachain disulfides connect Cys21/Cys56, Cys34/Cys53, and Cys42/Cys74.

The protein localises to the secreted. Functionally, probable serine protease inhibitor. The polypeptide is Serine protease inhibitor Kazal-type 7 (Spink7) (Rattus norvegicus (Rat)).